The following is a 377-amino-acid chain: Guanine nucleotide-binding protein subunit alpha-13 (377 aa).

2 S-palmitoyl cysteine lipidation sites follow: C14 and C18. Residues 47–377 form the G-alpha domain; that stretch reads RLVKILLLGA…HDNLKQLMLQ (331 aa). The segment at 50-63 is G1 motif; sequence KILLLGAGESGKST. GTP-binding positions include 58–63, S173, and 197–200; these read ESGKST and LLAR. S62 contributes to the Mg(2+) binding site. The interval 195–203 is G2 motif; the sequence is DILLARRPT. Residue T203 participates in Mg(2+) binding. T203 bears the Phosphothreonine; by PKA mark. The tract at residues 218–227 is G3 motif; it reads FKMVDVGGQR. The tract at residues 287-294 is G4 motif; that stretch reads ILFLNKTD. Residues 291–294 and A349 contribute to the GTP site; that span reads NKTD. The segment at 347-352 is G5 motif; the sequence is TTAINT.

The protein belongs to the G-alpha family. G(12) subfamily. G proteins are composed of 3 units; alpha, beta and gamma. The alpha chain contains the guanine nucleotide binding site. Interacts with UBXD5. Interacts with HAX1. Interacts (in GTP-bound form) with PPP5C (via TPR repeats); activates PPP5C phosphatase activity and translocates PPP5C to the cell membrane. Interacts with RGS22. Interacts (in GTP-bound form) with ARHGEF1. Interacts (in GTP-bound form) with ARHGEF11 (via RGS domain). Interacts (in GTP-bound form) with ARHGEF12 (via RGS domain). Interacts with CTNND1. Interacts with GASL2L2. Interacts with GPR35. Interacts with GPR174. Palmitoylation is critical for proper membrane localization and signaling. Post-translationally, phosphorylation on Thr-203 by PKA destabilizes the heterotrimer of alpha, beta and gamma, and inhibits Rho activation. As to expression, expressed in testis, including in Leydig cells and in the seminiferous epithelium, in differentiating cells from the spermatogonia to mature spermatozoa stages and round spermatids (at protein level). Expressed in 99.2% of spermatozoa from healthy individuals, but only in 28.6% of macrocephalic spermatozoa from infertile patients (at protein level).

The protein localises to the cell membrane. It localises to the melanosome. It is found in the cytoplasm. Its subcellular location is the nucleus. Functionally, guanine nucleotide-binding proteins (G proteins) are involved as modulators or transducers in various transmembrane signaling systems. Activates effector molecule RhoA by binding and activating RhoGEFs (ARHGEF1/p115RhoGEF, ARHGEF11/PDZ-RhoGEF and ARHGEF12/LARG). GNA13-dependent Rho signaling subsequently regulates transcription factor AP-1 (activating protein-1). Promotes tumor cell invasion and metastasis by activating RhoA/ROCK signaling pathway. Inhibits CDH1-mediated cell adhesion in a process independent from Rho activation. In lymphoid follicles, transmits P2RY8- and S1PR2-dependent signals that lead to inhibition of germinal center (GC) B cell growth and migration outside the GC niche. The polypeptide is Guanine nucleotide-binding protein subunit alpha-13 (GNA13) (Homo sapiens (Human)).